We begin with the raw amino-acid sequence, 908 residues long: MATIHVDGKEYEVNGADNLLEACLSLGLDIPYFCWHPALGSVGACRQCAVKQYQNAEDTRGRLVMSCMTPASDGTFISIDDEEAKQFRESVVEWLMTNHPHDCPVCEEGGNCHLQDMTVMTGHSFRRYRFTKRTHRNQDLGPFISHEMNRCIACYRCVRYYKDYADGTDLGVYGAHDNVYFGRPEDGTLESEFSGNLVEICPTGVFTDKTHSERYNRKWDMQFAPSICQQCSIGCNISPGERYGELRRIENRYNGTVNHYFLCDRGRFGYGYVNLKDRPRQPVQRRGDDFITLNAEQAMQGAADILRQSKKVIGIGSPRASVESNFALRELVGEENFYTGIAHGEQERLQLALKVLREGGIYTPALREIESYDAVLVLGEDVTQTGARVALAVRQAVKGKAREMAAAQKVADWQIAAILNIGQRAKHPLFVTNVDDTRLDDIAAWTYRAPVEDQARLGFAIAHALDNSAPAVDGIEPELQSKIDVIVQALAGAKKPLIISGTNAGSLEVIQAAANVAKALKGRGADVGITMIARSVNSMGLGIMGGGSLEEALTELETGRADAVVVLENDLHRHASAIRVNAALAKAPLVMVVDHQRTAIMENAHLVLSAASFAESDGTVINNEGRAQRFFQVYDPAYYDSKTVMLESWRWLHSLHSTLLSREVDWTQLDHVIDAVVAKIPELAGIKDAAPDATFRIRGQKLAREPHRYSGRTAMRANISVHEPRQPQDIDTMFTFSMEGNNQPTAHRSQVPFAWAPGWNSPQAWNKFQDEVGGKLRFGDPGVRLFETSENGLDYFTSVPARFQPQDGKWRIAPYYHLFGSDELSQRAPVFQSRMPQPYIKLNPADAAKLGVNAGTRVSFSYDGNTVTLPVEIAEGLTAGQVGLPMGMSGIAPVLAGAHLEDLKEAQQ.

Residues 2–83 enclose the 2Fe-2S ferredoxin-type domain; that stretch reads ATIHVDGKEY…GTFISIDDEE (82 aa). 4 residues coordinate [2Fe-2S] cluster: Cys34, Cys45, Cys48, and Cys67. A 4Fe-4S His(Cys)3-ligated-type domain is found at 83 to 122; that stretch reads EAKQFRESVVEWLMTNHPHDCPVCEEGGNCHLQDMTVMTG. [4Fe-4S] cluster contacts are provided by His99, Cys103, Cys106, Cys112, Cys151, Cys154, Cys157, Cys201, Cys228, Cys231, Cys235, and Cys263. The region spanning 221–277 is the 4Fe-4S Mo/W bis-MGD-type domain; it reads MQFAPSICQQCSIGCNISPGERYGELRRIENRYNGTVNHYFLCDRGRFGYGYVNLKD.

The protein belongs to the complex I 75 kDa subunit family. In terms of assembly, composed of 13 different subunits. Subunits NuoCD, E, F, and G constitute the peripheral sector of the complex. Requires [2Fe-2S] cluster as cofactor. The cofactor is [4Fe-4S] cluster.

Its subcellular location is the cytoplasm. It localises to the cell inner membrane. It carries out the reaction a quinone + NADH + 5 H(+)(in) = a quinol + NAD(+) + 4 H(+)(out). Functionally, NDH-1 shuttles electrons from NADH, via FMN and iron-sulfur (Fe-S) centers, to quinones in the respiratory chain. The immediate electron acceptor for the enzyme in this species is believed to be ubiquinone. Couples the redox reaction to proton translocation (for every two electrons transferred, four hydrogen ions are translocated across the cytoplasmic membrane), and thus conserves the redox energy in a proton gradient. In Escherichia coli (strain K12), this protein is NADH-quinone oxidoreductase subunit G (nuoG).